The chain runs to 435 residues: Tol-Pal system protein TolB (435 aa).

The first 28 residues, 1–28, serve as a signal peptide directing secretion; sequence MTKCSFFRAILVAVGLMTAAVFATPANA. The segment at 288-310 is disordered; that stretch reads STAAIDTSPSYSPDGARVSFESD.

It belongs to the TolB family. The Tol-Pal system is composed of five core proteins: the inner membrane proteins TolA, TolQ and TolR, the periplasmic protein TolB and the outer membrane protein Pal. They form a network linking the inner and outer membranes and the peptidoglycan layer.

It is found in the periplasm. Its function is as follows. Part of the Tol-Pal system, which plays a role in outer membrane invagination during cell division and is important for maintaining outer membrane integrity. The chain is Tol-Pal system protein TolB from Rhizobium johnstonii (strain DSM 114642 / LMG 32736 / 3841) (Rhizobium leguminosarum bv. viciae).